We begin with the raw amino-acid sequence, 76 residues long: Histone acetyltransferase (76 aa).

In terms of assembly, physically interacts with histone H3 in infected macrophages.

The protein resides in the secreted. Its subcellular location is the host cytoplasm. It is found in the host nucleus. It carries out the reaction L-lysyl-[protein] + acetyl-CoA = N(6)-acetyl-L-lysyl-[protein] + CoA + H(+). Its activity is regulated as follows. Is completely inhibited by anacardic acid, an inhibitor of HAT activity. Histone acetyltransferase, which by binding to the host chromatin, may manipulate the expression of host genes involved in anti-inflammatory responses to evade clearance and to survive in the intracellular milieu. Acetylates histone H3 at the 'Lys-9' and 'Lys-14' positions. The sequence is that of Histone acetyltransferase from Mycobacterium tuberculosis (strain CDC 1551 / Oshkosh).